We begin with the raw amino-acid sequence, 739 residues long: Adenosylcobalamin-dependent ribonucleoside-triphosphate reductase (739 aa).

Cys-119 and Cys-419 are joined by a disulfide. The tract at residues 147-158 is effector region-1; it reads SMPFSFLFDELM. The interval 168–313 is effector region-2; that stretch reads ARSNISQIPR…ICNLIGKAVV (146 aa). Active-site residues include Cys-408 and Glu-410. Residues 565-626 are adenosylcobalamin-binding-1; the sequence is FHYGAYLIQR…NPNFASAGTV (62 aa). An adenosylcobalamin-binding-2 region spans residues 685-724; sequence LQQAPKEPIDKETYEKRSQEITGNVEEVFSQLNSDVKDLE.

The protein belongs to the class II ribonucleoside-triphosphate reductase family. As to quaternary structure, monomer. Adenosylcob(III)alamin serves as cofactor.

It catalyses the reaction a 2'-deoxyribonucleoside 5'-triphosphate + [thioredoxin]-disulfide + H2O = a ribonucleoside 5'-triphosphate + [thioredoxin]-dithiol. With respect to regulation, allosterically regulated by ATP and dNTP. This chain is Adenosylcobalamin-dependent ribonucleoside-triphosphate reductase (rtpR), found in Lactobacillus leichmannii.